The following is a 499-amino-acid chain: Maturase K (499 aa).

Belongs to the intron maturase 2 family. MatK subfamily.

It localises to the plastid. The protein resides in the chloroplast. Functionally, usually encoded in the trnK tRNA gene intron. Probably assists in splicing its own and other chloroplast group II introns. The polypeptide is Maturase K (Camellia sinensis (Tea plant)).